A 1092-amino-acid chain; its full sequence is Probable cellulose synthase A catalytic subunit 6 [UDP-forming] (1092 aa).

Over 1 to 280 the chain is Cytoplasmic; that stretch reads MEASAGLVAG…SSSRINPYRM (280 aa). Residues C42, C45, C61, C64, C69, C72, C84, and C87 each contribute to the Zn(2+) site. The segment at 42-88 adopts an RING-type; degenerate zinc-finger fold; the sequence is CQICGDDVGEGPDGEPFVACNECAFPVCRNCYDYERREGSQACPQCK. Positions 100–123 are disordered; the sequence is VAGDEEEDGVDDLEGEFGLDGRED. Residues 103–116 are compositionally biased toward acidic residues; sequence DEEEDGVDDLEGEF. A helical transmembrane segment spans residues 281–301; the sequence is IIIIRLVVLGFFFHYRVMHPV. The Extracellular segment spans residues 302-303; it reads ND. The helical transmembrane segment at 304–324 threads the bilayer; sequence AFALWLISVICEIWFAMSWIL. Residues 325–868 are Cytoplasmic-facing; sequence DQFPKWLPIE…FLERFSYINS (544 aa). Residues S363, K369, E370, and D399 each contribute to the UDP-alpha-D-glucose site. Residue D399 is part of the active site. Residues 453–480 adopt a coiled-coil conformation; sequence VRERRAMKRDYEEFKVRINALVAKAQKV. Position 540 (K540) interacts with UDP-alpha-D-glucose. Positions 541 and 565 each coordinate Mn(2+). D792 is an active-site residue. The chain crosses the membrane as a helical span at residues 869–889; the sequence is IVYPWTSIPLLAYCTLPAICL. The Extracellular portion of the chain corresponds to 890-901; sequence LTGKFITPELTN. A helical membrane pass occupies residues 902 to 922; sequence VASLWFMSLFICIFVTGILEM. Residues 923-937 are Cytoplasmic-facing; that stretch reads RWSGVAIDDWWRNEQ. Residues 938–958 traverse the membrane as a helical segment; that stretch reads FWVIGGVSSHLFAVFQGLLKV. The Extracellular segment spans residues 959–987; sequence LAGVDTSFTVTSKAGDDEEFSELYTFKWT. Residues 988-1008 form a helical membrane-spanning segment; that stretch reads TLLIPPTTLLLLNFIGVVAGV. At 1009–1019 the chain is on the cytoplasmic side; sequence SNAINNGYESW. A helical transmembrane segment spans residues 1020–1040; sequence GPLFGKLFFAFWVIVHLYPFL. Topologically, residues 1041-1049 are extracellular; that stretch reads KGLVGRQNR. The helical transmembrane segment at 1050-1070 threads the bilayer; the sequence is TPTIVIVWSILLASIFSLLWV. The Cytoplasmic segment spans residues 1071-1092; sequence RIDPFLAKNNGPLLEECGLDCN.

It belongs to the glycosyltransferase 2 family. Plant cellulose synthase subfamily. Requires Mn(2+) as cofactor. Zn(2+) serves as cofactor.

Its subcellular location is the cell membrane. The catalysed reaction is [(1-&gt;4)-beta-D-glucosyl](n) + UDP-alpha-D-glucose = [(1-&gt;4)-beta-D-glucosyl](n+1) + UDP + H(+). Its pathway is glycan metabolism; plant cellulose biosynthesis. Probable catalytic subunit of cellulose synthase terminal complexes ('rosettes'), required for beta-1,4-glucan microfibril crystallization, a major mechanism of the cell wall formation. The sequence is that of Probable cellulose synthase A catalytic subunit 6 [UDP-forming] (CESA6) from Oryza sativa subsp. japonica (Rice).